The following is a 662-amino-acid chain: Bifunctional polymyxin resistance protein ArnA (662 aa).

Residues 1–307 are formyltransferase ArnAFT; the sequence is MTSKAVVFAY…ELGLVEGARL (307 aa). His106 functions as the Proton donor; for formyltransferase activity in the catalytic mechanism. (6R)-10-formyltetrahydrofolate-binding positions include Arg116 and 138–142; that span reads IERAD. A dehydrogenase ArnADH region spans residues 316-662; it reads RRTRVLILGV…EALREREAQA (347 aa). Residues Asp349 and 370–371 each bind NAD(+); that span reads DI. Residues Ala395, Tyr400, and 434–435 each bind UDP-alpha-D-glucuronate; that span reads TS. Glu436 serves as the catalytic Proton acceptor; for decarboxylase activity. UDP-alpha-D-glucuronate-binding positions include Arg462, Asn493, 527 to 536, and Tyr614; that span reads RLVDGGAQKR. Arg620 acts as the Proton donor; for decarboxylase activity in catalysis.

The protein in the N-terminal section; belongs to the Fmt family. UDP-L-Ara4N formyltransferase subfamily. This sequence in the C-terminal section; belongs to the NAD(P)-dependent epimerase/dehydratase family. UDP-glucuronic acid decarboxylase subfamily. As to quaternary structure, homohexamer, formed by a dimer of trimers.

It catalyses the reaction UDP-alpha-D-glucuronate + NAD(+) = UDP-beta-L-threo-pentopyranos-4-ulose + CO2 + NADH. The catalysed reaction is UDP-4-amino-4-deoxy-beta-L-arabinose + (6R)-10-formyltetrahydrofolate = UDP-4-deoxy-4-formamido-beta-L-arabinose + (6S)-5,6,7,8-tetrahydrofolate + H(+). It participates in nucleotide-sugar biosynthesis; UDP-4-deoxy-4-formamido-beta-L-arabinose biosynthesis; UDP-4-deoxy-4-formamido-beta-L-arabinose from UDP-alpha-D-glucuronate: step 1/3. It functions in the pathway nucleotide-sugar biosynthesis; UDP-4-deoxy-4-formamido-beta-L-arabinose biosynthesis; UDP-4-deoxy-4-formamido-beta-L-arabinose from UDP-alpha-D-glucuronate: step 3/3. The protein operates within bacterial outer membrane biogenesis; lipopolysaccharide biosynthesis. Bifunctional enzyme that catalyzes the oxidative decarboxylation of UDP-glucuronic acid (UDP-GlcUA) to UDP-4-keto-arabinose (UDP-Ara4O) and the addition of a formyl group to UDP-4-amino-4-deoxy-L-arabinose (UDP-L-Ara4N) to form UDP-L-4-formamido-arabinose (UDP-L-Ara4FN). The modified arabinose is attached to lipid A and is required for resistance to polymyxin and cationic antimicrobial peptides. The polypeptide is Bifunctional polymyxin resistance protein ArnA (Pseudomonas aeruginosa (strain ATCC 15692 / DSM 22644 / CIP 104116 / JCM 14847 / LMG 12228 / 1C / PRS 101 / PAO1)).